The sequence spans 814 residues: Protein kinase C-binding protein NELL2 (814 aa).

The N-terminal stretch at 1-19 is a signal peptide; it reads MEFILGIFCVLFCLRAGAG. N-linked (GlcNAc...) asparagine glycosylation is found at Asn-51, Asn-223, and Asn-296. A Laminin G-like domain is found at 53 to 226; sequence SKAFLFQDTS…SQCPDLNRTC (174 aa). Residues 270-329 form the VWFC 1 domain; it reads RSCTVKGNIYRELESWMDGCKKCTCTNGTAQCETLTCSAPNCLSGFSPAYVPGKCCKECQ. The 43-residue stretch at 395–437 folds into the EGF-like 1 domain; sequence GHDFCSEGHNCMGYSICKNLDDKAVCICRDGFRALREDNAYCE. Disulfide bonds link Cys-399–Cys-411, Cys-405–Cys-420, and Cys-422–Cys-436. Ca(2+) is bound by residues Asp-438, Ile-439, and Glu-441. An EGF-like 2; calcium-binding domain is found at 438 to 479; the sequence is DIDECTEGRHYCRENTVCVNTPGSFMCVCQTGYLKIDDYSCT. 9 disulfide bridges follow: Cys-442–Cys-455, Cys-449–Cys-464, Cys-466–Cys-478, Cys-484–Cys-497, Cys-491–Cys-506, Cys-508–Cys-519, Cys-523–Cys-533, Cys-527–Cys-539, and Cys-541–Cys-550. 3 residues coordinate Ca(2+): Asn-457, Thr-458, and Ser-461. Residues 480-520 enclose the EGF-like 3; calcium-binding domain; that stretch reads EHNECATNQHSCDENAMCFNTVGGHNCVCQPGYTGNGTDCR. Residue Asn-515 is glycosylated (N-linked (GlcNAc...) asparagine). One can recognise an EGF-like 4 domain in the interval 521 to 551; it reads AFCKDGCRNGGTCIAPNICACPQGFTGPSCE. Residues Asp-553, Ile-554, and Glu-556 each coordinate Ca(2+). The EGF-like 5; calcium-binding domain maps to 553–599; sequence DIDECTEGFVQCDSRANCINLPGWYHCECRDGYHDNGMFSLGGESCE. Cystine bridges form between Cys-557/Cys-570, Cys-564/Cys-579, and Cys-581/Cys-598. Ca(2+) contacts are provided by Asn-572, Leu-573, and Trp-576. The Ca(2+) site is built by Asp-600, Ile-601, and Glu-603. The 36-residue stretch at 600 to 635 folds into the EGF-like 6; calcium-binding domain; that stretch reads DIDECATGRHSCSNDTVCFNLDGGFDCRCPHGKNCS. Cystine bridges form between Cys-604-Cys-617, Cys-611-Cys-626, and Cys-628-Cys-634. Asn-613 carries N-linked (GlcNAc...) asparagine glycosylation. Residues Asn-619, Leu-620, and Gly-623 each coordinate Ca(2+). Residue Asn-633 is glycosylated (N-linked (GlcNAc...) asparagine). VWFC domains follow at residues 636–691 and 696–754; these read GDCT…PECD and SQCL…PRCV.

As to quaternary structure, homotrimer.

It is found in the secreted. May regulate neuronal differentiation, polarization and axon guidance. This chain is Protein kinase C-binding protein NELL2 (nell2.L), found in Xenopus laevis (African clawed frog).